Here is a 256-residue protein sequence, read N- to C-terminus: Trypsin, alkaline A (256 aa).

The N-terminal stretch at 1-17 is a signal peptide; that stretch reads MRLFLALLALGFAAVAA. A propeptide spans 18-24 (activation peptide); that stretch reads VPAYPQR. The Peptidase S1 domain maps to 25 to 256; it reads IVGGSTTTIQ…RFANWIRNNS (232 aa). A disulfide bridge links Cys-55 with Cys-71. Residues His-70 and Asp-115 each act as charge relay system in the active site. 2 disulfides stabilise this stretch: Cys-180/Cys-197 and Cys-209/Cys-233. Ser-213 functions as the Charge relay system in the catalytic mechanism.

The protein belongs to the peptidase S1 family. In terms of tissue distribution, midgut.

Its subcellular location is the secreted. The protein localises to the extracellular space. It carries out the reaction Preferential cleavage: Arg-|-Xaa, Lys-|-Xaa.. The polypeptide is Trypsin, alkaline A (Manduca sexta (Tobacco hawkmoth)).